Here is a 24-residue protein sequence, read N- to C-terminus: Acidic phospholipase A2 4 (24 aa).

Belongs to the phospholipase A2 family. Group II subfamily. Requires Ca(2+) as cofactor. As to expression, expressed by the venom gland.

The protein resides in the secreted. It carries out the reaction a 1,2-diacyl-sn-glycero-3-phosphocholine + H2O = a 1-acyl-sn-glycero-3-phosphocholine + a fatty acid + H(+). Its function is as follows. PLA2 catalyzes the calcium-dependent hydrolysis of the 2-acyl groups in 3-sn-phosphoglycerides. This is Acidic phospholipase A2 4 from Trimeresurus stejnegeri (Chinese green tree viper).